The sequence spans 237 residues: Speedy protein E4 (237 aa).

Residues Met1–Ser61 form a disordered region.

It belongs to the Speedy/Ringo family. Predominantly expressed in testis.

This Homo sapiens (Human) protein is Speedy protein E4.